Here is a 448-residue protein sequence, read N- to C-terminus: Probable glycine dehydrogenase (decarboxylating) subunit 1 (448 aa).

This sequence belongs to the GcvP family. N-terminal subunit subfamily. The glycine cleavage system is composed of four proteins: P, T, L and H. In this organism, the P 'protein' is a heterodimer of two subunits.

It carries out the reaction N(6)-[(R)-lipoyl]-L-lysyl-[glycine-cleavage complex H protein] + glycine + H(+) = N(6)-[(R)-S(8)-aminomethyldihydrolipoyl]-L-lysyl-[glycine-cleavage complex H protein] + CO2. Its function is as follows. The glycine cleavage system catalyzes the degradation of glycine. The P protein binds the alpha-amino group of glycine through its pyridoxal phosphate cofactor; CO(2) is released and the remaining methylamine moiety is then transferred to the lipoamide cofactor of the H protein. In Thermomicrobium roseum (strain ATCC 27502 / DSM 5159 / P-2), this protein is Probable glycine dehydrogenase (decarboxylating) subunit 1.